Reading from the N-terminus, the 332-residue chain is L-lactate dehydrogenase A-like 6A (332 aa).

Position 2 is an N-acetylalanine (Ala-2). An N6-acetyllysine; alternate mark is found at Lys-5 and Lys-57. Lys-5 carries the post-translational modification N6-succinyllysine; alternate. 29 to 57 (GSVGVACAISILLKGLSDELVLVDVDEGK) is a binding site for NAD(+). Residue Lys-57 forms a Glycyl lysine isopeptide (Lys-Gly) (interchain with G-Cter in SUMO2); alternate linkage. Lys-81 carries the N6-acetyllysine modification. Arg-99 is a binding site for NAD(+). Arg-106 is a binding site for substrate. Lys-118 is modified (N6-acetyllysine; alternate). Lys-118 is subject to N6-succinyllysine; alternate. Asn-138 contacts NAD(+). Residues Asn-138 and Arg-169 each contribute to the substrate site. The active-site Proton acceptor is the His-193. Lys-232 is modified (N6-acetyllysine). A Phosphotyrosine modification is found at Tyr-239. Lys-243 bears the N6-acetyllysine mark. Residue Thr-248 participates in substrate binding. Thr-309 is subject to Phosphothreonine. Lys-318 is modified (N6-acetyllysine; alternate). Position 318 is an N6-succinyllysine; alternate (Lys-318). The residue at position 322 (Thr-322) is a Phosphothreonine.

Belongs to the LDH/MDH superfamily. LDH family. Testis-specific.

The protein localises to the cytoplasm. It carries out the reaction (S)-lactate + NAD(+) = pyruvate + NADH + H(+). It participates in fermentation; pyruvate fermentation to lactate; (S)-lactate from pyruvate: step 1/1. Functionally, catalyzes the interconversion of L-lactate and pyruvate with nicotinamide adenine dinucleotide NAD(+) as a coenzyme. Significantly increases the transcriptional activity of JUN, when overexpressed. This Homo sapiens (Human) protein is L-lactate dehydrogenase A-like 6A (LDHAL6A).